A 1483-amino-acid chain; its full sequence is Rho GTPase-activating protein 23 (1483 aa).

The segment at 15–34 (PEPRPPQLPLGPRDGCSSGR) is disordered. The region spanning 71-155 (HCILKEEENG…TLELSIMPKD (85 aa)) is the PDZ domain. Disordered regions lie at residues 212-276 (ISAL…PGSR) and 300-345 (AGER…GQEG). Residues 316–325 (SQDRLEDVTT) are compositionally biased toward basic and acidic residues. Residues 331–342 (CSTSQDALSQLG) are compositionally biased toward polar residues. Phosphoserine is present on residues Ser-361 and Ser-372. The disordered stretch occupies residues 385 to 407 (PSARTSACPSRDLTQAPPPSGLQ). Ser-421 carries the phosphoserine modification. Disordered regions lie at residues 448 to 485 (SLAQ…DHRD) and 508 to 527 (NLGF…RLGR). A phosphoserine mark is found at Ser-515, Ser-579, Ser-607, and Ser-619. Thr-652 is modified (phosphothreonine). A phosphoserine mark is found at Ser-655, Ser-658, and Ser-673. One can recognise a PH domain in the interval 684 to 804 (DIRREGWLYY…WIRAIRENSR (121 aa)). A disordered region spans residues 827–848 (KVSHSSGPKADSSPKGSRGLGG). Lys-850 is covalently cross-linked (Glycyl lysine isopeptide (Lys-Gly) (interchain with G-Cter in SUMO2)). Disordered regions lie at residues 860–879 (RGLR…VAAP), 1093–1150 (FSDD…SWVP), 1171–1361 (KRKK…GSRP), and 1419–1469 (ELGG…LQGL). Residues 901–1093 (IRLEECQPAT…TLIQHSDWFF (193 aa)) form the Rho-GAP domain. The span at 1099–1110 (KGERTPVDDKEP) shows a compositional bias: basic and acidic residues. 2 stretches are compositionally biased toward polar residues: residues 1133-1144 (GSDSTTCSSAKS) and 1236-1248 (SIVS…STMD). Residues 1338–1351 (GSASSSSQESLRPP) are compositionally biased toward low complexity. Residues 1440 to 1457 (SGLSSLESTKARASSAAS) are compositionally biased toward polar residues.

Functionally, GTPase activator for the Rho-type GTPases by converting them to an inactive GDP-bound state. The chain is Rho GTPase-activating protein 23 (Arhgap23) from Mus musculus (Mouse).